The primary structure comprises 167 residues: MDLQLITTEMVVEAYGDTTDGISVFKGNRRVGYITGLKKDLAKQVKRKTTIKEYRNRRLEQARDMLPDAVEEMKVFLENQLAKYDCEVFINQTQPNVHINSCKCYIIVNPLTGKHRLGISNPNRSASDMAEDVEACFKISKSPAEHHILINGLSQDDIVEVIKTLCM.

Its function is as follows. Participates in the host transcription shutoff by causing premature termination of transcription from host DNA. Acts as a site-specific termination factor that abolishes transcript elongation on cytosine-containing DNA but not on the 5-hydroxymethyl cytosine present in the viral DNA. Therefore inhibits as well transcription from other phages that contain cytosine in their DNA. The sequence is that of Protein alc (alc) from Enterobacteria phage T4 (Bacteriophage T4).